Consider the following 134-residue polypeptide: Profilin-3 (134 aa).

A disulfide bridge links Cys-13 with Cys-118. An Involved in PIP2 interaction motif is present at residues Ala-84–Thr-100. Residue Thr-114 is modified to Phosphothreonine.

It belongs to the profilin family. As to quaternary structure, occurs in many kinds of cells as a complex with monomeric actin in a 1:1 ratio. In terms of processing, phosphorylated by MAP kinases.

It is found in the cytoplasm. The protein localises to the cytoskeleton. Functionally, binds to actin and affects the structure of the cytoskeleton. At high concentrations, profilin prevents the polymerization of actin, whereas it enhances it at low concentrations. The polypeptide is Profilin-3 (Olea europaea (Common olive)).